The primary structure comprises 66 residues: Sodium/potassium-transporting ATPase subunit gamma (66 aa).

Residues 29 to 46 form a helical membrane-spanning segment; the sequence is GGLIFAGLAFIVGLLILL.

It belongs to the FXYD family. As to quaternary structure, regulatory subunit of the sodium/potassium-transporting ATPase which is composed of a catalytic alpha subunit, an auxiliary non-catalytic beta subunit and an additional regulatory subunit. As to expression, expressed in the distal convoluted tubule in the kidney. Found on basolateral membranes of nephron epithelial cells.

Its subcellular location is the membrane. May be involved in forming the receptor site for cardiac glycoside binding or may modulate the transport function of the sodium ATPase. The chain is Sodium/potassium-transporting ATPase subunit gamma (FXYD2) from Homo sapiens (Human).